Reading from the N-terminus, the 1214-residue chain is Formin-D (1214 aa).

Positions 10–379 (KKEESPQSID…KMNNGESYLD (370 aa)) constitute a GBD/FH3 domain. A coiled-coil region spans residues 401–448 (SGEKAVLIQKEIEDLKKQKKRDQDKLAEKDKLLTKLAKRMRKMEEAIK). The region spanning 457–544 (NNQIEIESPP…GSGDGIPLPP (88 aa)) is the FH1 domain. 2 stretches are compositionally biased toward polar residues: residues 462-479 (IESP…TTPG) and 518-534 (LDTT…QTEA). Disordered stretches follow at residues 462-490 (IESP…TSPV), 507-569 (APNG…SRPP), 868-948 (PKSV…PLKD), 1026-1045 (DKST…IKKS), 1054-1089 (LKKI…DDED), and 1133-1214 (MNLQ…EGEN). The segment covering 541–554 (PLPPGAPPPPPPPG) has biased composition (pro residues). One can recognise an FH2 domain in the interval 562–1037 (PQLCSRPPSI…STQRKNEKER (476 aa)). The span at 868 to 877 (PKSVEPKPDD) shows a compositional bias: basic and acidic residues. Polar residues predominate over residues 930–940 (QVNTNSTSDSK). The stretch at 1019–1056 (EIEKSIKDKSTQRKNEKERKEMEIKKSKLEMIHSKLKK) forms a coiled coil. The span at 1059–1071 (SPSSSNRILASNE) shows a compositional bias: polar residues. The DAD domain occupies 1065-1095 (RILASNESSPTSSTSSVVHQHDDEDEETIKE). Over residues 1161–1171 (SSTYSSISSIY) the composition is skewed to low complexity. Residues 1174–1214 (EPLDMSDQEDEDEEEEEDEEEEEEEEEGDDDNDNDEEEGEN) show a composition bias toward acidic residues. Positions 1176 to 1207 (LDMSDQEDEDEEEEEDEEEEEEEEEGDDDNDN) form a coiled coil.

It belongs to the formin homology family. Diaphanous subfamily. In terms of assembly, interacts (via GBD/FH3 domain) with activated Rho-GTPases.

Formins play an important role in the nucleation of actin and the formation of linear actin filaments. The chain is Formin-D (forD) from Dictyostelium discoideum (Social amoeba).